A 183-amino-acid chain; its full sequence is UPF0316 protein BcerKBAB4_3093 (183 aa).

Helical transmembrane passes span 6-26 (LIFV…ILLV), 32-52 (SAAG…GIVF), and 58-78 (WMNI…GGYI).

Belongs to the UPF0316 family.

It localises to the cell membrane. The sequence is that of UPF0316 protein BcerKBAB4_3093 from Bacillus mycoides (strain KBAB4) (Bacillus weihenstephanensis).